Consider the following 340-residue polypeptide: S-adenosylmethionine:tRNA ribosyltransferase-isomerase (340 aa).

It belongs to the QueA family. Monomer.

The protein resides in the cytoplasm. The enzyme catalyses 7-aminomethyl-7-carbaguanosine(34) in tRNA + S-adenosyl-L-methionine = epoxyqueuosine(34) in tRNA + adenine + L-methionine + 2 H(+). It functions in the pathway tRNA modification; tRNA-queuosine biosynthesis. In terms of biological role, transfers and isomerizes the ribose moiety from AdoMet to the 7-aminomethyl group of 7-deazaguanine (preQ1-tRNA) to give epoxyqueuosine (oQ-tRNA). This is S-adenosylmethionine:tRNA ribosyltransferase-isomerase from Nitratiruptor sp. (strain SB155-2).